Consider the following 498-residue polypeptide: Sugar transport protein 2 (498 aa).

Over M1–Q22 the chain is Cytoplasmic. Helical transmembrane passes span V23–I43, L80–S100, I117–G137, I140–I160, G167–V187, Y200–H220, L288–F308, I320–V340, L348–L368, A381–W401, G421–L441, and L450–L470. Over P471 to D498 the chain is Cytoplasmic.

It belongs to the major facilitator superfamily. Sugar transporter (TC 2.A.1.1) family. As to expression, pollen specific (at protein level).

Its subcellular location is the membrane. Its function is as follows. Mediates an active uptake of hexoses, probably by sugar/hydrogen symport. Can transport glucose, 3-O-methylglucose, xylose, mannose, fructose and galactose. This Arabidopsis thaliana (Mouse-ear cress) protein is Sugar transport protein 2 (STP2).